Reading from the N-terminus, the 63-residue chain is Bowman-Birk type proteinase inhibitor B-II (63 aa).

Cystine bridges form between cysteine 5–cysteine 62, cysteine 6–cysteine 23, cysteine 9–cysteine 57, cysteine 11–cysteine 21, cysteine 30–cysteine 37, cysteine 34–cysteine 49, and cysteine 39–cysteine 47.

It belongs to the Bowman-Birk serine protease inhibitor family.

This is Bowman-Birk type proteinase inhibitor B-II from Arachis hypogaea (Peanut).